The chain runs to 76 residues: Protein TraJ (76 aa).

It is found in the cytoplasm. Functionally, this protein is essential for positively regulating the expression of transfer genes that are involved in the conjugal transfer of DNA between bacterial cells. This is Protein TraJ (traJ) from Escherichia coli.